The chain runs to 194 residues: Probable thymidylate kinase (194 aa).

7–14 lines the ATP pocket; it reads GIDGSGKT.

This sequence belongs to the thymidylate kinase family.

The catalysed reaction is dTMP + ATP = dTDP + ADP. This is Probable thymidylate kinase (tmk) from Methanothermobacter thermautotrophicus (strain ATCC 29096 / DSM 1053 / JCM 10044 / NBRC 100330 / Delta H) (Methanobacterium thermoautotrophicum).